A 352-amino-acid polypeptide reads, in one-letter code: Nicotinate-nucleotide--dimethylbenzimidazole phosphoribosyltransferase (352 aa).

E316 serves as the catalytic Proton acceptor.

This sequence belongs to the CobT family.

It catalyses the reaction 5,6-dimethylbenzimidazole + nicotinate beta-D-ribonucleotide = alpha-ribazole 5'-phosphate + nicotinate + H(+). Its pathway is nucleoside biosynthesis; alpha-ribazole biosynthesis; alpha-ribazole from 5,6-dimethylbenzimidazole: step 1/2. In terms of biological role, catalyzes the synthesis of alpha-ribazole-5'-phosphate from nicotinate mononucleotide (NAMN) and 5,6-dimethylbenzimidazole (DMB). The polypeptide is Nicotinate-nucleotide--dimethylbenzimidazole phosphoribosyltransferase (Ruminiclostridium cellulolyticum (strain ATCC 35319 / DSM 5812 / JCM 6584 / H10) (Clostridium cellulolyticum)).